Reading from the N-terminus, the 417-residue chain is Exodeoxyribonuclease 7 large subunit (417 aa).

This sequence belongs to the XseA family. As to quaternary structure, heterooligomer composed of large and small subunits.

It localises to the cytoplasm. It catalyses the reaction Exonucleolytic cleavage in either 5'- to 3'- or 3'- to 5'-direction to yield nucleoside 5'-phosphates.. Its function is as follows. Bidirectionally degrades single-stranded DNA into large acid-insoluble oligonucleotides, which are then degraded further into small acid-soluble oligonucleotides. The protein is Exodeoxyribonuclease 7 large subunit of Lactococcus lactis subsp. lactis (strain IL1403) (Streptococcus lactis).